A 347-amino-acid chain; its full sequence is Fructose-1,6-bisphosphatase class 1 2 (347 aa).

Positions 92, 111, 113, and 114 each coordinate Mg(2+). Substrate contacts are provided by residues 114 to 117 (DGSS) and asparagine 202. Glutamate 274 contacts Mg(2+).

The protein belongs to the FBPase class 1 family. As to quaternary structure, homotetramer. Mg(2+) serves as cofactor.

It localises to the cytoplasm. The catalysed reaction is beta-D-fructose 1,6-bisphosphate + H2O = beta-D-fructose 6-phosphate + phosphate. It participates in carbohydrate biosynthesis; Calvin cycle. The protein is Fructose-1,6-bisphosphatase class 1 2 of Bradyrhizobium sp. (strain BTAi1 / ATCC BAA-1182).